The primary structure comprises 412 residues: uncharacterized protein (412 aa).

It belongs to the PQQ oxidoreductase GdhB family. Pyrroloquinoline quinone serves as cofactor.

This is an uncharacterized protein from Synechocystis sp. (strain ATCC 27184 / PCC 6803 / Kazusa).